Reading from the N-terminus, the 170-residue chain is Calcineurin subunit B type 1 (170 aa).

A lipid anchor (N-myristoyl glycine) is attached at Gly2. 4 EF-hand domains span residues 18-46 (DEIKRLGKRFKKLDLDNSGSLSVEEFMSL), 50-85 (QQNPLVQRVIDIFDTDGNGEVDFKEFIEGVSQFSVK), 87-122 (DKEQKLRFAFRIYDMDKDGYISNGELFQVLKMMVGN), and 128-163 (QLQQIVDKTIINADKDGDGRISFEEFCAVVGGLDIH). Asp31, Asp33, Ser35, Ser37, Glu42, Asp63, Asp65, Asn67, Glu69, Glu74, Asp100, Asp102, Asp104, Tyr106, and Glu111 together coordinate Ca(2+). A Phosphotyrosine modification is found at Tyr106. Residues 131–136 (QIVDKT) are calcineurin A binding. The Ca(2+) site is built by Asp141, Asp143, Asp145, Arg147, and Glu152.

This sequence belongs to the calcineurin regulatory subunit family. As to quaternary structure, forms a complex composed of a calmodulin-dependent catalytic subunit (also known as calcineurin A) and a regulatory Ca(2+)-binding subunit (also known as calcineurin B). There are three catalytic subunits, each encoded by a separate gene (PPP3CA, PPP3CB, and PPP3CC) and two regulatory subunits which are also encoded by separate genes (PPP3R1 and PPP3R2). The interaction between the 2 subunits is Ca(2+)-independent. Interacts with catalytic subunit PPP3CA/calcineurin A. Interacts with catalytic subunit PPP3CB/calcineurin A. Interacts with CIB1 (via C-terminal region); the interaction increases upon cardiomyocyte hypertrophy. Interacts with RCAN1. Interacts with SPATA33 (via PQIIIT motif).

It localises to the cytoplasm. Its subcellular location is the cytosol. It is found in the cell membrane. The protein resides in the sarcolemma. Its function is as follows. Regulatory subunit of calcineurin, a calcium-dependent, calmodulin stimulated protein phosphatase. Confers calcium sensitivity. This is Calcineurin subunit B type 1 (PPP3R1) from Bos taurus (Bovine).